The chain runs to 337 residues: Biotin synthase (337 aa).

The Radical SAM core domain maps to alanine 52–arginine 281. [4Fe-4S] cluster contacts are provided by cysteine 67, cysteine 71, and cysteine 74. [2Fe-2S] cluster-binding residues include cysteine 112, cysteine 144, cysteine 204, and arginine 276.

This sequence belongs to the radical SAM superfamily. Biotin synthase family. In terms of assembly, homodimer. The cofactor is [4Fe-4S] cluster. It depends on [2Fe-2S] cluster as a cofactor.

It catalyses the reaction (4R,5S)-dethiobiotin + (sulfur carrier)-SH + 2 reduced [2Fe-2S]-[ferredoxin] + 2 S-adenosyl-L-methionine = (sulfur carrier)-H + biotin + 2 5'-deoxyadenosine + 2 L-methionine + 2 oxidized [2Fe-2S]-[ferredoxin]. Its pathway is cofactor biosynthesis; biotin biosynthesis; biotin from 7,8-diaminononanoate: step 2/2. Functionally, catalyzes the conversion of dethiobiotin (DTB) to biotin by the insertion of a sulfur atom into dethiobiotin via a radical-based mechanism. This Methylobacterium radiotolerans (strain ATCC 27329 / DSM 1819 / JCM 2831 / NBRC 15690 / NCIMB 10815 / 0-1) protein is Biotin synthase.